The primary structure comprises 465 residues: UDP-N-acetylmuramate--L-alanine ligase (465 aa).

114 to 120 (GTHGKTT) provides a ligand contact to ATP.

This sequence belongs to the MurCDEF family.

Its subcellular location is the cytoplasm. It catalyses the reaction UDP-N-acetyl-alpha-D-muramate + L-alanine + ATP = UDP-N-acetyl-alpha-D-muramoyl-L-alanine + ADP + phosphate + H(+). Its pathway is cell wall biogenesis; peptidoglycan biosynthesis. Its function is as follows. Cell wall formation. This is UDP-N-acetylmuramate--L-alanine ligase from Chlorobium phaeobacteroides (strain BS1).